A 404-amino-acid polypeptide reads, in one-letter code: MQYSEIMIRYGELSTKKKNRMRFINKLKNNMEHVLSIYPDVSVKTDRDRGHVYLNGTDYHEVAESLKEIFGIQAFSPSFKVEKNVDTLVKAVQEIMTSVYKDGMTFKITAKRSDHSFELDSRALNHTLGDAVFSVLPNIKAQMKQPDINLKVEIRDEAAYISYEDIRGAGGLPVGTSGKGMLMLSGGIDSPVAGYLALKRGVDIEAVHFASPPYTSPGALKKAHDLTRKLTKFGGNIQFIEVPFTEIQEEIKAKAPEAYLMTLTRRFMMRITDRIREDRNGLVIINGESLGQVASQTLESMQAINAVTATPIIRPVVTMDKLEIIDIAQKIDTFDISIQPFEDCCTIFAPDRPKTNPKIKNTEQYEKRMDVEGLVERAVAGIMVTTIQPQADSDDVDDLIDDLL.

The THUMP domain maps to 60 to 165 (HEVAESLKEI…DEAAYISYED (106 aa)). Residues 183–184 (ML), 208–209 (HF), Arg265, Gly287, and Gln296 contribute to the ATP site.

Belongs to the ThiI family.

It localises to the cytoplasm. It carries out the reaction [ThiI sulfur-carrier protein]-S-sulfanyl-L-cysteine + a uridine in tRNA + 2 reduced [2Fe-2S]-[ferredoxin] + ATP + H(+) = [ThiI sulfur-carrier protein]-L-cysteine + a 4-thiouridine in tRNA + 2 oxidized [2Fe-2S]-[ferredoxin] + AMP + diphosphate. It catalyses the reaction [ThiS sulfur-carrier protein]-C-terminal Gly-Gly-AMP + S-sulfanyl-L-cysteinyl-[cysteine desulfurase] + AH2 = [ThiS sulfur-carrier protein]-C-terminal-Gly-aminoethanethioate + L-cysteinyl-[cysteine desulfurase] + A + AMP + 2 H(+). It functions in the pathway cofactor biosynthesis; thiamine diphosphate biosynthesis. In terms of biological role, catalyzes the ATP-dependent transfer of a sulfur to tRNA to produce 4-thiouridine in position 8 of tRNAs, which functions as a near-UV photosensor. Also catalyzes the transfer of sulfur to the sulfur carrier protein ThiS, forming ThiS-thiocarboxylate. This is a step in the synthesis of thiazole, in the thiamine biosynthesis pathway. The sulfur is donated as persulfide by IscS. In Streptococcus agalactiae serotype V (strain ATCC BAA-611 / 2603 V/R), this protein is Probable tRNA sulfurtransferase.